The primary structure comprises 192 residues: MKNLFRPLIVLFVVLAALTGLAYPAVMTAFGQAVFHDQANGSMLEQDGKVVGSKLIGQQFDAPQYFWGRLSATSPMPYNAQGSSGSNLGPTNPALLDEIKGRIDALKAAGTDMSKPVPVDLVTSSGSGLDPEISPAAAAYQIERVARARKLAPNDVQALVDRYTSGRQFGILGEARVNVLQLNLALDEMKRG.

The helical transmembrane segment at 7 to 27 (PLIVLFVVLAALTGLAYPAVM) threads the bilayer.

Belongs to the KdpC family. In terms of assembly, the system is composed of three essential subunits: KdpA, KdpB and KdpC.

The protein localises to the cell inner membrane. Part of the high-affinity ATP-driven potassium transport (or Kdp) system, which catalyzes the hydrolysis of ATP coupled with the electrogenic transport of potassium into the cytoplasm. This subunit acts as a catalytic chaperone that increases the ATP-binding affinity of the ATP-hydrolyzing subunit KdpB by the formation of a transient KdpB/KdpC/ATP ternary complex. In Paraburkholderia xenovorans (strain LB400), this protein is Potassium-transporting ATPase KdpC subunit.